Reading from the N-terminus, the 262-residue chain is 3-methyl-2-oxobutanoate hydroxymethyltransferase (262 aa).

Residues Asp42 and Asp81 each contribute to the Mg(2+) site. 3-methyl-2-oxobutanoate-binding positions include 42–43, Asp81, and Lys110; that span reads DS. A Mg(2+)-binding site is contributed by Glu112. Glu179 serves as the catalytic Proton acceptor.

Belongs to the PanB family. In terms of assembly, homodecamer; pentamer of dimers. Requires Mg(2+) as cofactor.

The protein localises to the cytoplasm. The enzyme catalyses 3-methyl-2-oxobutanoate + (6R)-5,10-methylene-5,6,7,8-tetrahydrofolate + H2O = 2-dehydropantoate + (6S)-5,6,7,8-tetrahydrofolate. Its pathway is cofactor biosynthesis; (R)-pantothenate biosynthesis; (R)-pantoate from 3-methyl-2-oxobutanoate: step 1/2. Its function is as follows. Catalyzes the reversible reaction in which hydroxymethyl group from 5,10-methylenetetrahydrofolate is transferred onto alpha-ketoisovalerate to form ketopantoate. The chain is 3-methyl-2-oxobutanoate hydroxymethyltransferase from Methylobacillus flagellatus (strain ATCC 51484 / DSM 6875 / VKM B-1610 / KT).